Here is a 167-residue protein sequence, read N- to C-terminus: Probable chemoreceptor glutamine deamidase CheD (167 aa).

The protein belongs to the CheD family.

It carries out the reaction L-glutaminyl-[protein] + H2O = L-glutamyl-[protein] + NH4(+). Its function is as follows. Probably deamidates glutamine residues to glutamate on methyl-accepting chemotaxis receptors (MCPs), playing an important role in chemotaxis. This Moorella thermoacetica (strain ATCC 39073 / JCM 9320) protein is Probable chemoreceptor glutamine deamidase CheD.